The primary structure comprises 169 residues: Transcription antitermination protein NusB (169 aa).

Residues 1 to 23 (MADSKKPAIKKPVPKGDRKANRR) are disordered.

The protein belongs to the NusB family.

In terms of biological role, involved in transcription antitermination. Required for transcription of ribosomal RNA (rRNA) genes. Binds specifically to the boxA antiterminator sequence of the ribosomal RNA (rrn) operons. The polypeptide is Transcription antitermination protein NusB (Rhodopseudomonas palustris (strain HaA2)).